The following is a 1033-amino-acid chain: Isoleucine--tRNA ligase 2 (1033 aa).

The 'HIGH' region signature appears at 47–57 (PTANGLPHVGH). The 'KMSKS' region signature appears at 590-594 (KMSKS). Lysine 593 provides a ligand contact to ATP.

It belongs to the class-I aminoacyl-tRNA synthetase family. IleS type 2 subfamily. As to quaternary structure, monomer. It depends on Zn(2+) as a cofactor.

The protein resides in the cytoplasm. The catalysed reaction is tRNA(Ile) + L-isoleucine + ATP = L-isoleucyl-tRNA(Ile) + AMP + diphosphate. Functionally, catalyzes the attachment of isoleucine to tRNA(Ile). As IleRS can inadvertently accommodate and process structurally similar amino acids such as valine, to avoid such errors it has two additional distinct tRNA(Ile)-dependent editing activities. One activity is designated as 'pretransfer' editing and involves the hydrolysis of activated Val-AMP. The other activity is designated 'posttransfer' editing and involves deacylation of mischarged Val-tRNA(Ile). This is Isoleucine--tRNA ligase 2 from Bacillus thuringiensis subsp. konkukian (strain 97-27).